We begin with the raw amino-acid sequence, 63 residues long: Large ribosomal subunit protein bL35 (63 aa).

This sequence belongs to the bacterial ribosomal protein bL35 family.

The sequence is that of Large ribosomal subunit protein bL35 from Campylobacter jejuni subsp. doylei (strain ATCC BAA-1458 / RM4099 / 269.97).